Consider the following 398-residue polypeptide: ORC1-type DNA replication protein 1 (398 aa).

ATP is bound by residues threonine 67–alanine 71, tyrosine 208, and arginine 220.

The protein belongs to the CDC6/cdc18 family.

In terms of biological role, involved in regulation of DNA replication. The protein is ORC1-type DNA replication protein 1 (cdc6-1) of Sulfurisphaera tokodaii (strain DSM 16993 / JCM 10545 / NBRC 100140 / 7) (Sulfolobus tokodaii).